Here is a 483-residue protein sequence, read N- to C-terminus: Phloretin 2'-O-glucosyltransferase (483 aa).

The active-site Proton acceptor is the H15. Residue H15 participates in an anthocyanidin binding. The active-site Charge relay is D118. UDP-alpha-D-glucose is bound by residues T140, A360, Q362, H377, W380, N381, S382, and E385. Position 400 (A400) interacts with an anthocyanidin. 2 residues coordinate UDP-alpha-D-glucose: E401 and Q402.

This sequence belongs to the UDP-glycosyltransferase family. In terms of tissue distribution, highly expressed in roots and at lower levels in leaves, flowers and fruits.

It carries out the reaction phloretin + UDP-alpha-D-glucose = phlorizin + UDP + H(+). Functionally, glycosyltransferase that possesses phloretin 2'-O-glycosyltransferase activity. Converts phloretin to phlorizin (phloretin 2'-O-glucoside), a potent antioxidant. Is specific for phloretin and does not possess glycosyltransferase activity toward caffeic acid, catechin, chlorogenic acid, 2-coumaric acid, 3-coumaric acid, 4-coumaric acid, cyanidin, 3,4-dihydroxyhydrocinnamic acid, epicatechin, 3-hydroxybenzoic acid, naringenin, 3,4-dihydroxybenzoic acid, quercetin and rutin. Can glycosylate phloretin in the presence of UDP-glucose, UDP-xylose and UDP-galactose. The protein is Phloretin 2'-O-glucosyltransferase of Malus domestica (Apple).